We begin with the raw amino-acid sequence, 615 residues long: 1-deoxy-D-xylulose-5-phosphate synthase (615 aa).

Thiamine diphosphate is bound by residues His76 and Gly117–Ser119. Asp148 is a binding site for Mg(2+). Thiamine diphosphate-binding positions include Gly149–Ala150, Asn177, Tyr284, and Glu365. Asn177 contacts Mg(2+).

Belongs to the transketolase family. DXPS subfamily. As to quaternary structure, homodimer. The cofactor is Mg(2+). Thiamine diphosphate serves as cofactor.

It catalyses the reaction D-glyceraldehyde 3-phosphate + pyruvate + H(+) = 1-deoxy-D-xylulose 5-phosphate + CO2. It functions in the pathway metabolic intermediate biosynthesis; 1-deoxy-D-xylulose 5-phosphate biosynthesis; 1-deoxy-D-xylulose 5-phosphate from D-glyceraldehyde 3-phosphate and pyruvate: step 1/1. Its function is as follows. Catalyzes the acyloin condensation reaction between C atoms 2 and 3 of pyruvate and glyceraldehyde 3-phosphate to yield 1-deoxy-D-xylulose-5-phosphate (DXP). This chain is 1-deoxy-D-xylulose-5-phosphate synthase, found in Francisella tularensis subsp. tularensis (strain FSC 198).